Consider the following 268-residue polypeptide: tRNA pseudouridine synthase A (268 aa).

The Nucleophile role is filled by D52. Residue Y110 participates in substrate binding.

It belongs to the tRNA pseudouridine synthase TruA family. Homodimer.

The catalysed reaction is uridine(38/39/40) in tRNA = pseudouridine(38/39/40) in tRNA. Formation of pseudouridine at positions 38, 39 and 40 in the anticodon stem and loop of transfer RNAs. This Prochlorococcus marinus (strain MIT 9312) protein is tRNA pseudouridine synthase A.